Reading from the N-terminus, the 609-residue chain is Pair-rule protein odd-paired (609 aa).

The segment at 20–41 is disordered; it reads RMSPNTTASNSNAQQQQQQQLE. Residues 22-32 are compositionally biased toward polar residues; it reads SPNTTASNSNA. A C2H2-type 1; atypical zinc finger spans residues 210 to 249; that stretch reads MQCLWIDPDQPGLVPPGGRKTCNKVFHSMHEIVTHLTVEH. 4 C2H2-type zinc fingers span residues 258-285, 291-315, 321-345, and 351-375; these read HACF…IRVH, FACP…KRTH, FKCE…SHVH, and YNCR…MKVH. 2 disordered regions span residues 373 to 550 and 583 to 609; these read KVHG…ASAS and EAMN…ATAY. Positions 399-409 are enriched in polar residues; sequence IITGGAQTPPS. Composition is skewed to low complexity over residues 414–434 and 449–498; these read GSAG…IKSS and HLGA…LTAH. Over residues 528–537 the composition is skewed to basic residues; it reads SHHHHPHHHQ. Residues 538–550 show a composition bias toward low complexity; it reads AAPSPGAAAASAS. The segment covering 591–601 has biased composition (basic residues); sequence FGHHHHHHHLM.

It belongs to the GLI C2H2-type zinc-finger protein family. In terms of tissue distribution, expressed throughout all segment primordia; expressed ubiquitously in the ectoderm and mesoderm precursors.

It is found in the nucleus. In terms of biological role, transcription factor essential for parasegmental subdivision of the embryo. It is involved in the activation of wingless (wg) in odd parasegments. It is also required for the timely activation of wg in the remaining parasegments and for the timely activation of engrailed (en) in all parasegments. This Drosophila melanogaster (Fruit fly) protein is Pair-rule protein odd-paired (opa).